The following is a 1020-amino-acid chain: Protein translocase subunit SecA (1020 aa).

ATP contacts are provided by residues Gln99, 117 to 121 (GEGKT), and Asp633. The interval 963 to 992 (NEQPSQEMAADEETQEESKIEENKPEPIVV) is disordered. Over residues 978 to 987 (EESKIEENKP) the composition is skewed to basic and acidic residues. 4 residues coordinate Zn(2+): Cys1002, Cys1004, Cys1013, and Cys1014.

The protein belongs to the SecA family. Monomer and homodimer. Part of the essential Sec protein translocation apparatus which comprises SecA, SecYEG and auxiliary proteins SecDF. Other proteins may also be involved. It depends on Zn(2+) as a cofactor.

It is found in the cell inner membrane. It localises to the cytoplasm. It catalyses the reaction ATP + H2O + cellular proteinSide 1 = ADP + phosphate + cellular proteinSide 2.. In terms of biological role, part of the Sec protein translocase complex. Interacts with the SecYEG preprotein conducting channel. Has a central role in coupling the hydrolysis of ATP to the transfer of proteins into and across the cell membrane, serving as an ATP-driven molecular motor driving the stepwise translocation of polypeptide chains across the membrane. The polypeptide is Protein translocase subunit SecA (Protochlamydia amoebophila (strain UWE25)).